We begin with the raw amino-acid sequence, 184 residues long: Shikimate kinase (184 aa).

12 to 17 (GSGKST) serves as a coordination point for ATP. Ser-16 is a Mg(2+) binding site. Substrate contacts are provided by Asp-34, Arg-58, and Gly-80. Position 117 (Arg-117) interacts with ATP. Substrate is bound at residue Arg-136. Residue Arg-153 participates in ATP binding. The disordered stretch occupies residues 164–184 (SRLDDPTPNTSPSSTASGAAT). Low complexity predominate over residues 169-184 (PTPNTSPSSTASGAAT).

The protein belongs to the shikimate kinase family. As to quaternary structure, monomer. Mg(2+) serves as cofactor.

The protein resides in the cytoplasm. It carries out the reaction shikimate + ATP = 3-phosphoshikimate + ADP + H(+). It functions in the pathway metabolic intermediate biosynthesis; chorismate biosynthesis; chorismate from D-erythrose 4-phosphate and phosphoenolpyruvate: step 5/7. In terms of biological role, catalyzes the specific phosphorylation of the 3-hydroxyl group of shikimic acid using ATP as a cosubstrate. This is Shikimate kinase from Mycobacterium ulcerans (strain Agy99).